Consider the following 100-residue polypeptide: UPF0213 protein YhbQ (100 aa).

The GIY-YIG domain occupies T2 to R77.

Belongs to the UPF0213 family.

This is UPF0213 protein YhbQ from Escherichia coli O139:H28 (strain E24377A / ETEC).